The sequence spans 256 residues: METYVNKLHEGSTYTAAVQYNVLEKDDDPASLTIWVPMFQSSMPADLLIKELANVNILVKQISTPKGPSLRVMINSRSAVLAQMPSKFTICANVSLDERSKLAYDVTTPCEIKACSLTCLKSKNMLTTVKDLTMKTLNPTHDIIALCEFENIVTSKKVIIPTYLRSISVRNKDLNTLENITTTEFKNAITNAKIIPYSGLLLVITVTDNKGAFKYIKPQSQFIVDLGAYLEKESIYYVTTNWKHTATRFAIKPMED.

The tract at residues 1–110 (METYVNKLHE…KLAYDVTTPC (110 aa)) is interaction with M2-1. The interval 110–183 (CEIKACSLTC…LNTLENITTT (74 aa)) is nuclear targeting and binding to host importin KPNB1. A Nuclear export signal motif is present at residues 194-206 (IIPYSGLLLVITV). Thr-205 bears the Phosphothreonine; by host CK2 mark.

The protein belongs to the pneumovirinae M protein family. Forms dimers. Forms higher-order oligomers. Interacts with glycoprotein G (via N-terminus). Interacts with protein M2-1; this interaction directs the matrix protein localization to cytoplasmic inclusions comprising viral proteins L, N, P, and M2-1 and mediates the matrix protein association with the nucleocapsid. Interacts with host importin KPNB1; this interaction mediates nuclear import of the matrix protein early during infection. Interacts with host AP3M1; this interaction plays an essential role in trafficking the matrix protein in host cells. Interacts with host CAV1; this interaction probably facilitates viral budding. Interacts with host CFL1; this interaction probably facilitates viral replication. Interacts with host ZNF502; this interaction probably facilitates viral release. Interacts with host RACK1. In terms of processing, phosphorylation is important for oligomerization.

The protein localises to the virion. It is found in the host cytoplasm. It localises to the host nucleus. Its subcellular location is the host cell membrane. In terms of biological role, plays a crucial role in virus assembly into filaments and budding. Early in infection, localizes in the nucleus where it inhibits host cell transcription through direct binding to host chromatin. Later in infection, traffics to the cytoplasm through the action of host CRM1 to associate with inclusion bodies, the site of viral transcription and replication. During virus assembly and budding, acts as a bridge between the nucleocapsid and the lipid bilayer. Also plays a role in the inhibition of host interferon-beta response in a RACK1-dependent manner. The polypeptide is Matrix protein (M) (Homo sapiens (Human)).